We begin with the raw amino-acid sequence, 650 residues long: Exonuclease 3'-5' domain-containing protein 2 (650 aa).

The Mitochondrial intermembrane segment spans residues 1–6 (MSRQNL). A helical membrane pass occupies residues 7–29 (VALTVTTLLGVAMGGFVLWKGIQ). At 30–650 (RRWSKTSRVM…YGDDLPIKLS (621 aa)) the chain is on the cytoplasmic side. The interval 34–89 (KTSRVMQQQPQQPQQPQQPQPQPQPQPQPQPEHPQPQQQVPGGREWPPPEDDQLPF) is disordered. Positions 49–67 (PQQPQPQPQPQPQPQPEHP) are enriched in pro residues. A divalent metal cation-binding residues include D137, E139, and D275. The 93-residue stretch at 184-276 (ILADGAILKV…DQVTYAARDA (93 aa)) folds into the 3'-5' exonuclease domain. The segment at 340-373 (SQLKPRNRKAKTDRMVPGNNQGRDPRKHKRKPLG) is disordered.

Belongs to the EXD2 family. Homodimer. Interacts with RBBP8, MRE11 and BRCA1. It depends on Mg(2+) as a cofactor. The cofactor is Mn(2+).

Its subcellular location is the mitochondrion outer membrane. The protein resides in the mitochondrion matrix. It is found in the nucleus. It localises to the chromosome. It catalyses the reaction Exonucleolytic cleavage in the 3'- to 5'-direction to yield nucleoside 5'-phosphates.. In terms of biological role, exonuclease that has both 3'-5' exoribonuclease and exodeoxyribonuclease activities, depending on the divalent metal cation used as cofactor. In presence of Mg(2+), only shows 3'-5' exoribonuclease activity, while it shows both exoribonuclease and exodeoxyribonuclease activities in presence of Mn(2+). Acts as an exoribonuclease in mitochondrion, possibly by regulating ATP production and mitochondrial translation. Also involved in the response to DNA damage. Acts as 3'-5' exodeoxyribonuclease for double-strand breaks resection and efficient homologous recombination. Plays a key role in controlling the initial steps of chromosomal break repair, it is recruited to chromatin in a damage-dependent manner and functionally interacts with the MRN complex to accelerate resection through its 3'-5' exonuclease activity, which efficiently processes double-stranded DNA substrates containing nicks. Also involved in response to replicative stress: recruited to stalled forks and is required to stabilize and restart stalled replication forks by restraining excessive fork regression, thereby suppressing their degradation. The protein is Exonuclease 3'-5' domain-containing protein 2 of Mus musculus (Mouse).